Here is a 341-residue protein sequence, read N- to C-terminus: Thiamine-phosphate synthase (341 aa).

The unknown stretch occupies residues 1–123; sequence MAVVEEQVVL…AAAAKEWRYR (123 aa). Residues 61–80 are disordered; that stretch reads AARDTPHDPGTGLEHPDEGV. The tract at residues 124 to 341 is thiamine-phosphate synthase; it reads VYTLESTATG…AWFLERLNRG (218 aa). Residues 171–175 and asparagine 203 contribute to the 4-amino-2-methyl-5-(diphosphooxymethyl)pyrimidine site; that span reads QLREK. The Mg(2+) site is built by aspartate 204 and aspartate 223. Serine 242 contacts 4-amino-2-methyl-5-(diphosphooxymethyl)pyrimidine. Residue 268–270 coordinates 2-[(2R,5Z)-2-carboxy-4-methylthiazol-5(2H)-ylidene]ethyl phosphate; that stretch reads TPT. Lysine 271 is a binding site for 4-amino-2-methyl-5-(diphosphooxymethyl)pyrimidine. Glycine 298 contributes to the 2-[(2R,5Z)-2-carboxy-4-methylthiazol-5(2H)-ylidene]ethyl phosphate binding site.

Belongs to the thiamine-phosphate synthase family. It depends on Mg(2+) as a cofactor.

It catalyses the reaction 2-[(2R,5Z)-2-carboxy-4-methylthiazol-5(2H)-ylidene]ethyl phosphate + 4-amino-2-methyl-5-(diphosphooxymethyl)pyrimidine + 2 H(+) = thiamine phosphate + CO2 + diphosphate. The enzyme catalyses 2-(2-carboxy-4-methylthiazol-5-yl)ethyl phosphate + 4-amino-2-methyl-5-(diphosphooxymethyl)pyrimidine + 2 H(+) = thiamine phosphate + CO2 + diphosphate. The catalysed reaction is 4-methyl-5-(2-phosphooxyethyl)-thiazole + 4-amino-2-methyl-5-(diphosphooxymethyl)pyrimidine + H(+) = thiamine phosphate + diphosphate. It functions in the pathway cofactor biosynthesis; thiamine diphosphate biosynthesis; thiamine phosphate from 4-amino-2-methyl-5-diphosphomethylpyrimidine and 4-methyl-5-(2-phosphoethyl)-thiazole: step 1/1. Functionally, condenses 4-methyl-5-(beta-hydroxyethyl)thiazole monophosphate (THZ-P) and 2-methyl-4-amino-5-hydroxymethyl pyrimidine pyrophosphate (HMP-PP) to form thiamine monophosphate (TMP). The polypeptide is Thiamine-phosphate synthase (Gloeobacter violaceus (strain ATCC 29082 / PCC 7421)).